Consider the following 261-residue polypeptide: MSRYAILGSTGNCGTALIENVLDSSMTEVHAFCRNQEKLERLVPRVISDARVKVFVGGIGDTETLAACLHGCNAVFLCITTNDNVPGCRVAQDTALGVVKVLERSRADGFLPMPKLVLLSSATIDDVLSRNTPWVLRSILLKSASHVYEDLRKTEILLRAEQDWLTTIFIKPGALSVDIQRGHALSLTDEDSPVSYLDLAAAMIEAVNDPQGRYDMRNVGVVNTHGRANFPSGTPLCIAVGLLSHFAPFLHPYLPSGTGPR.

It belongs to the avfA family.

Its pathway is secondary metabolite biosynthesis. Its function is as follows. Oxidoreductase; part of the gene cluster that mediates the biosynthesis of pestheic acid, a diphenyl ether which is a biosynthetic precursor of the unique chloropupukeananes. The biosynthesis initiates from condensation of acetate and malonate units catalyzed by the non-reducing PKS ptaA. As the ptaA protein is TE/CLC domain-deficient, hydrolysis and Claisen cyclization of the polyketide could be catalyzed by ptaB containing a beta-lactamase domain. The ptaB protein might hydrolyze the thioester bond between the ACP of ptaA and the intermediate to release atrochrysone carboxylic acid, which is spontaneously dehydrated to form endocrocin anthrone. Endocrocin anthrone is then converted to endocrocin, catalyzed by the anthrone oxygenase ptaC. Spontaneous decarboxylation of endocrocin occurs to generate emodin. An O-methyltransferase (ptaH or ptaI) could methylate emodin to form physcion. PtaJ could then catalyze the oxidative cleavage of physcion, and rotation of the intermediate could then afford desmethylisosulochrin. PtaF, a putative NADH-dependent oxidoreductase, might also participate in the oxidative cleavage step. Desmethylisosulochrin is then transformed by another O-methyltransferase (ptaH or ptaI) to form isosulochrin. Chlorination of isosulochrin by ptaM in the cyclohexadienone B ring then produces chloroisosulochrin. PtaE is responsible for the oxidative coupling reactions of both benzophenones isosulouchrin and chloroisosulochrin to RES-1214-1 and pestheic acid respectively, regardless of chlorination. This chain is Oxidoreductase ptaF, found in Pestalotiopsis fici (strain W106-1 / CGMCC3.15140).